Here is a 601-residue protein sequence, read N- to C-terminus: HIRA-interacting protein 3 (601 aa).

Disordered regions lie at residues lysine 60–proline 469 and serine 546–serine 601. Over residues glycine 66–lysine 76 the composition is skewed to basic and acidic residues. Residues serine 85, serine 96, and serine 98 each carry the phosphoserine modification. Positions glutamate 97–serine 113 are enriched in low complexity. Residues arginine 117–lysine 129 are compositionally biased toward basic residues. Residues lysine 130–leucine 149 show a composition bias toward basic and acidic residues. Serine 134 is subject to Phosphoserine. Residues threonine 135 and threonine 141 each carry the phosphothreonine modification. A phosphoserine mark is found at serine 152, serine 153, and serine 163. A Phosphothreonine modification is found at threonine 167. Residues glycine 186–serine 205 are compositionally biased toward basic and acidic residues. Phosphoserine occurs at positions 205, 207, 208, 231, 234, 238, 313, 359, 360, 384, and 389. Composition is skewed to basic and acidic residues over residues serine 238 to serine 264 and serine 313 to glycine 324. Residues arginine 347–lysine 378 show a composition bias toward polar residues. Low complexity predominate over residues serine 379 to aspartate 388. Phosphothreonine is present on threonine 391. Phosphoserine is present on residues serine 396 and serine 398. Positions serine 413–serine 432 are enriched in low complexity. The tract at residues serine 429–threonine 572 is interaction with the histone H2A-H2B complex. Residues tryptophan 556–glycine 566 are compositionally biased toward polar residues. 5 positions are modified to phosphoserine: serine 564, serine 575, serine 595, serine 596, and serine 600. Over residues threonine 568–proline 580 the composition is skewed to basic and acidic residues.

Interacts (via C-terminus) with histone H2A-H2B dimers; the interaction is direct. Interacts with HIRA. Interacts with CK2. Phosphorylated by CK2.

The protein localises to the nucleus. Histone chaperone that carries a H2A-H2B histone complex and facilitates its deposition onto chromatin. This Mus musculus (Mouse) protein is HIRA-interacting protein 3.